The sequence spans 171 residues: Small ribosomal subunit protein uS5 (171 aa).

The 64-residue stretch at 15–78 folds into the S5 DRBM domain; that stretch reads LKDRLVAINR…EAAKKNLTRV (64 aa).

This sequence belongs to the universal ribosomal protein uS5 family. Part of the 30S ribosomal subunit. Contacts proteins S4 and S8.

Its function is as follows. With S4 and S12 plays an important role in translational accuracy. Located at the back of the 30S subunit body where it stabilizes the conformation of the head with respect to the body. The polypeptide is Small ribosomal subunit protein uS5 (Phocaeicola vulgatus (strain ATCC 8482 / DSM 1447 / JCM 5826 / CCUG 4940 / NBRC 14291 / NCTC 11154) (Bacteroides vulgatus)).